A 117-amino-acid chain; its full sequence is Large ribosomal subunit protein bL17 (117 aa).

The protein belongs to the bacterial ribosomal protein bL17 family. Part of the 50S ribosomal subunit. Contacts protein L32.

The sequence is that of Large ribosomal subunit protein bL17 from Campylobacter lari (strain RM2100 / D67 / ATCC BAA-1060).